A 323-amino-acid polypeptide reads, in one-letter code: tRNA N6-adenosine threonylcarbamoyltransferase (323 aa).

Positions 105, 109, and 126 each coordinate Fe cation. Residues 126-130 (YVSGG), aspartate 158, glycine 171, glutamate 175, and asparagine 255 each bind substrate. Residue aspartate 283 participates in Fe cation binding.

It belongs to the KAE1 / TsaD family. Monomer. Component of the KEOPS complex that consists of Kae1, Bud32, Cgi121 and Pcc1; the whole complex dimerizes. Fe(2+) is required as a cofactor.

It localises to the cytoplasm. The catalysed reaction is L-threonylcarbamoyladenylate + adenosine(37) in tRNA = N(6)-L-threonylcarbamoyladenosine(37) in tRNA + AMP + H(+). Functionally, required for the formation of a threonylcarbamoyl group on adenosine at position 37 (t(6)A37) in tRNAs that read codons beginning with adenine. Is a component of the KEOPS complex that is probably involved in the transfer of the threonylcarbamoyl moiety of threonylcarbamoyl-AMP (TC-AMP) to the N6 group of A37. Kae1 likely plays a direct catalytic role in this reaction, but requires other protein(s) of the complex to fulfill this activity. The protein is tRNA N6-adenosine threonylcarbamoyltransferase of Archaeoglobus fulgidus (strain ATCC 49558 / DSM 4304 / JCM 9628 / NBRC 100126 / VC-16).